Consider the following 116-residue polypeptide: Large ribosomal subunit protein bL21c (116 aa).

Belongs to the bacterial ribosomal protein bL21 family. In terms of assembly, part of the 50S ribosomal subunit.

It localises to the plastid. The protein resides in the chloroplast. This protein binds to 23S rRNA. This Marchantia polymorpha (Common liverwort) protein is Large ribosomal subunit protein bL21c.